Reading from the N-terminus, the 184-residue chain is Protein YrdA (184 aa).

This sequence belongs to the gamma-class carbonic anhydrase family.

The protein is Protein YrdA (yrdA) of Escherichia coli (strain K12).